Here is a 1081-residue protein sequence, read N- to C-terminus: Probable cellulose synthase A catalytic subunit 8 [UDP-forming] (1081 aa).

Residues 1 to 277 (MDGDADAVKS…PSSRINPYRM (277 aa)) are Cytoplasmic-facing. Zn(2+) contacts are provided by Cys-19, Cys-22, Cys-38, Cys-41, Cys-46, Cys-49, Cys-61, and Cys-64. Residues 19–65 (CQICGDGVGTTAEGDVFAACDVCGFPVCRPCYEYERKDGTQACPQCK) form an RING-type; degenerate zinc finger. A disordered region spans residues 72-148 (KGSPAIRGEE…YDSGEIPRGY (77 aa)). Positions 81–91 (EGEDTDADDVS) are enriched in acidic residues. Residues 103–112 (QKQKIADRMR) are compositionally biased toward basic and acidic residues. The chain crosses the membrane as a helical span at residues 278–298 (VIVLRLVVLSIFLHYRITNPV). The Extracellular portion of the chain corresponds to 299 to 300 (RN). Residues 301–321 (AYPLWLLSVICEIWFALSWIL) traverse the membrane as a helical segment. Residues 322–864 (DQFPKWFPIN…INTTIYPLTS (543 aa)) are Cytoplasmic-facing. Positions 360, 366, 367, and 396 each coordinate UDP-alpha-D-glucose. The active site involves Asp-396. The stretch at 450–477 (VKDRRAMKREYEEFKVRINGLVAKAQKV) forms a coiled coil. Lys-537 contacts UDP-alpha-D-glucose. The Mn(2+) site is built by Lys-538 and Asp-562. The segment at 660–684 (SLCGGRKKASKSKKKSSDKKKSNKH) is disordered. The span at 664-682 (GRKKASKSKKKSSDKKKSN) shows a compositional bias: basic residues. Asp-781 is an active-site residue. The chain crosses the membrane as a helical span at residues 865-885 (IPLLIYCVLPAICLLTGKFII). Topologically, residues 886-890 (PEISN) are extracellular. A helical transmembrane segment spans residues 891–911 (FASIWFISLFISIFATGILEM). Residues 912–926 (RWSGVGIDEWWRNEQ) are Cytoplasmic-facing. Residues 927–947 (FWVIGGISAHLFAVFQGLLKV) traverse the membrane as a helical segment. Residues 948-977 (LAGIDTNFTVTSKASDEDGDFAELYMFKWT) are Extracellular-facing. A glycan (N-linked (GlcNAc...) asparagine) is linked at Asn-954. A helical membrane pass occupies residues 978-998 (TLLIPPTTILIINLVGVVAGI). Residues 999 to 1009 (SYAINSGYQSW) lie on the Cytoplasmic side of the membrane. A helical transmembrane segment spans residues 1010-1030 (GPLFGKLFFAFWVIVHLYPFL). At 1031-1039 (KGLMGRQNR) the chain is on the extracellular side. Residues 1040-1060 (TPTIVVVWAILLASIFSLLWV) form a helical membrane-spanning segment. The Cytoplasmic portion of the chain corresponds to 1061–1081 (RIDPFTTRVTGPDTQTCGINC).

This sequence belongs to the glycosyltransferase 2 family. Plant cellulose synthase subfamily. The cofactor is Mn(2+). Zn(2+) is required as a cofactor.

Its subcellular location is the cell membrane. It catalyses the reaction [(1-&gt;4)-beta-D-glucosyl](n) + UDP-alpha-D-glucose = [(1-&gt;4)-beta-D-glucosyl](n+1) + UDP + H(+). It participates in glycan metabolism; plant cellulose biosynthesis. Its function is as follows. Probable catalytic subunit of cellulose synthase terminal complexes ('rosettes'), required for beta-1,4-glucan microfibril crystallization, a major mechanism of the cell wall formation. This Oryza sativa subsp. japonica (Rice) protein is Probable cellulose synthase A catalytic subunit 8 [UDP-forming] (CESA8).